We begin with the raw amino-acid sequence, 234 residues long: MYASNLLYLLALWNLWDLSGGQQDIPNGKATLPSPQTPQNTIDQIGINQNYWFTYNALKQNETLAIIDTMEMRIASSLLEFKAQMEIQLQPLKIIMRHHASNIKASNNIKMRRFEKVGSRHFHIEKNLMQTWFEAYVTCRKMNGHLANIQDEMELDGILALAPNNSYWIDISKLVENGGTFVSTLTGREPFFVKWKSNQDTKKKNQCVYIYAKEMSYDECFEKKSFVCQADQWA.

The N-terminal stretch at 1–21 (MYASNLLYLLALWNLWDLSGG) is a signal peptide. N-linked (GlcNAc...) asparagine glycosylation is found at Asn-61 and Asn-164. In terms of domain architecture, C-type lectin spans 137–234 (VTCRKMNGHL…SFVCQADQWA (98 aa)). 2 disulfide bridges follow: Cys-139–Cys-228 and Cys-207–Cys-220.

Main cells of the accessory gland and in seminal fluid.

The protein resides in the secreted. Its function is as follows. Responsible for physiological and behavioral changes in mated female flies. The sequence is that of Accessory gland protein Acp29AB (Acp29AB) from Drosophila melanogaster (Fruit fly).